Here is a 180-residue protein sequence, read N- to C-terminus: Small ribosomal subunit protein uS5 (180 aa).

Residues 1–26 (MAEEKDKKQSSRRRNNRRTEKESEWQ) form a disordered region. Positions 17–26 (RRTEKESEWQ) are enriched in basic and acidic residues. Residues 25 to 88 (WQERVVQIRR…ADGKKHLVNV (64 aa)) enclose the S5 DRBM domain.

The protein belongs to the universal ribosomal protein uS5 family. As to quaternary structure, part of the 30S ribosomal subunit. Contacts proteins S4 and S8.

In terms of biological role, with S4 and S12 plays an important role in translational accuracy. Functionally, located at the back of the 30S subunit body where it stabilizes the conformation of the head with respect to the body. The polypeptide is Small ribosomal subunit protein uS5 (Synechococcus elongatus (strain ATCC 33912 / PCC 7942 / FACHB-805) (Anacystis nidulans R2)).